Reading from the N-terminus, the 250-residue chain is GTP cyclohydrolase 1 type 2 homolog (250 aa).

5 residues coordinate a divalent metal cation: H63, H64, D100, H218, and E222.

The protein belongs to the GTP cyclohydrolase I type 2/NIF3 family. Homohexamer.

This is GTP cyclohydrolase 1 type 2 homolog from Pyrococcus horikoshii (strain ATCC 700860 / DSM 12428 / JCM 9974 / NBRC 100139 / OT-3).